A 702-amino-acid polypeptide reads, in one-letter code: Elongation factor G (702 aa).

A tr-type G domain is found at 8-290 (ERYRNIGISA…GVVEYLPSPV (283 aa)). GTP is bound by residues 17 to 24 (AHIDAGKT), 88 to 92 (DTPGH), and 142 to 145 (NKMD).

The protein belongs to the TRAFAC class translation factor GTPase superfamily. Classic translation factor GTPase family. EF-G/EF-2 subfamily.

It localises to the cytoplasm. Functionally, catalyzes the GTP-dependent ribosomal translocation step during translation elongation. During this step, the ribosome changes from the pre-translocational (PRE) to the post-translocational (POST) state as the newly formed A-site-bound peptidyl-tRNA and P-site-bound deacylated tRNA move to the P and E sites, respectively. Catalyzes the coordinated movement of the two tRNA molecules, the mRNA and conformational changes in the ribosome. The chain is Elongation factor G from Janthinobacterium sp. (strain Marseille) (Minibacterium massiliensis).